The primary structure comprises 498 residues: MGDRGGAGSSRRRRTGSRVSVQGGSGPKVEEDEVREAAVSPDLGAGGDAPAPAPAPAHTRDKDRQTSVGDGHWELRCHRLQDSLFSSDSGFSNYRGILNWCVVMLILSNARLSLENLIKYGILVDPIQVVSLFLKDPYSWPAPCLIIASNIFIVATFQIEKRLSVGALTEQMGLLLHVVNLATIICFPAAVALLVESITPVGSLFALASYSIIFLKLSSYRDVNLWCRQRRVKAKAVSAGKKVSGAAAQNTVSYPDNLTYRDLYYFIFAPTLCYELNFPRSPRIRKRFLLRRVLEMLFFTQLQVGLIQQWMVPTIQNSMKPFKDMDYSRIIERLLKLAVPNHLIWLIFFYWLFHSCLNAVAELLQFGDREFYRDWWNAESVTYFWQNWNIPVHKWCIRHFYKPMLRLGSNKWMARTGVFWASAFFHEYLVSIPLRMFRLWAFTAMMAQVPLAWIVNRFFQGNYGNAAVWVTLIIGQPVAVLMYVHDYYVLNYDAPVGA.

Residues 1-66 (MGDRGGAGSS…AHTRDKDRQT (66 aa)) form a disordered region. At 1 to 92 (MGDRGGAGSS…SLFSSDSGFS (92 aa)) the chain is on the cytoplasmic side. The interval 1–96 (MGDRGGAGSS…SDSGFSNYRG (96 aa)) is involved in homomerization. S20 carries the post-translational modification Phosphoserine. A compositionally biased stretch (basic and acidic residues) spans 58–68 (HTRDKDRQTSV). A helical membrane pass occupies residues 93 to 127 (NYRGILNWCVVMLILSNARLSLENLIKYGILVDPI). The Lumenal portion of the chain corresponds to 128–139 (QVVSLFLKDPYS). Residues 128-139 (QVVSLFLKDPYS) are extracellular loop 1 (EL1). A helical transmembrane segment spans residues 140-165 (WPAPCLIIASNIFIVATFQIEKRLSV). Positions 140–498 (WPAPCLIIAS…VLNYDAPVGA (359 aa)) are MBOAT fold. Topologically, residues 166-170 (GALTE) are cytoplasmic. A helical membrane pass occupies residues 171–193 (QMGLLLHVVNLATIICFPAAVAL). The Lumenal segment spans residues 194 to 200 (LVESITP). The helical transmembrane segment at 201-232 (VGSLFALASYSIIFLKLSSYRDVNLWCRQRRV) threads the bilayer. Residues 233-284 (KAKAVSAGKKVSGAAAQNTVSYPDNLTYRDLYYFIFAPTLCYELNFPRSPRI) lie on the Cytoplasmic side of the membrane. The intracellular loop 1 (IL1) stretch occupies residues 235–287 (KAVSAGKKVSGAAAQNTVSYPDNLTYRDLYYFIFAPTLCYELNFPRSPRIRKR). Residues 285–319 (RKRFLLRRVLEMLFFTQLQVGLIQQWMVPTIQNSM) traverse the membrane as a helical segment. Residues 320 to 326 (KPFKDMD) lie on the Lumenal side of the membrane. Residues 327–364 (YSRIIERLLKLAVPNHLIWLIFFYWLFHSCLNAVAELL) form a helical membrane-spanning segment. At 365-410 (QFGDREFYRDWWNAESVTYFWQNWNIPVHKWCIRHFYKPMLRLGSN) the chain is on the cytoplasmic side. Positions 365–410 (QFGDREFYRDWWNAESVTYFWQNWNIPVHKWCIRHFYKPMLRLGSN) are intracellular loop 2 (IL2). The short motif at 371–377 (FYRDWWN) is the FYXDWWN motif element. An acyl-CoA-binding positions include 385 to 393 (WQNWNIPVH), Y401, and R415. The segment at 391–405 (PVHKWCIRHFYKPML) is amphipathic helix (AH). Residues 411-431 (KWMARTGVFWASAFFHEYLVS) traverse the membrane as a helical segment. The active site involves H426. Over 432-439 (IPLRMFRL) the chain is Lumenal. A helical transmembrane segment spans residues 440-458 (WAFTAMMAQVPLAWIVNRF). The Cytoplasmic portion of the chain corresponds to 459 to 460 (FQ). Residues 461–492 (GNYGNAAVWVTLIIGQPVAVLMYVHDYYVLNY) form a helical membrane-spanning segment. Y488 is an an acyl-CoA binding site. Residues 493-498 (DAPVGA) are Lumenal-facing.

Belongs to the membrane-bound acyltransferase family. Sterol o-acyltransferase subfamily. As to quaternary structure, homodimer or homotetramer; both forms have similar enzymatic activities.

It is found in the endoplasmic reticulum membrane. It carries out the reaction an acyl-CoA + a 1,2-diacyl-sn-glycerol = a triacyl-sn-glycerol + CoA. It catalyses the reaction all-trans-retinol + an acyl-CoA = an all-trans-retinyl ester + CoA. The enzyme catalyses 2-(9Z-octadecenoyl)-glycerol + (9Z)-octadecenoyl-CoA = 1,2-di-(9Z-octadecenoyl)-sn-glycerol + CoA. The catalysed reaction is 1,2-di-(9Z-octadecenoyl)-sn-glycerol + (9Z)-octadecenoyl-CoA = 1,2,3-tri-(9Z-octadecenoyl)-glycerol + CoA. It carries out the reaction all-trans-retinol + hexadecanoyl-CoA = all-trans-retinyl hexadecanoate + CoA. It catalyses the reaction 1-O-(9Z-octadecenyl)-glycerol + (9Z)-octadecenoyl-CoA = 1-O-(9Z-octadecyl)-3-(9Z-octadecenoyl)-glycerol + CoA. The enzyme catalyses 1-O-(9Z-octadecyl)-3-(9Z-octadecenoyl)-glycerol + (9Z)-octadecenoyl-CoA = 1-O-(9Z-octadecenyl)-2,3-di-(9Z-octadecenoyl)glycerol + CoA. The catalysed reaction is 1-(9Z-octadecenoyl)-glycerol + (9Z)-octadecenoyl-CoA = 1,2-di-(9Z-octadecenoyl)-glycerol + CoA. It carries out the reaction 1,2-di-(9Z-octadecenoyl)-glycerol + (9Z)-octadecenoate + H(+) = 1,2,3-tri-(9Z-octadecenoyl)-glycerol + H2O. It catalyses the reaction 1-octadecanoyl-2-(5Z,8Z,11Z,14Z-eicosatetraenoyl)-sn-glycerol + (9Z)-octadecenoyl-CoA = 1-octadecanoyl-2-(5Z,8Z,11Z,14Z)-eicosatetraenoyl-3-(9Z)-octadecenoyl-sn-glycerol + CoA. The enzyme catalyses hexadecane-1,2-diol + 2 hexadecanoyl-CoA = 1,2-O,O-dihexadecanoyl-1,2-hexadecanediol + 2 CoA. The catalysed reaction is hexadecane-1,2-diol + hexadecanoyl-CoA = 2-hydroxyhexadecyl hexadecanoate + CoA. It carries out the reaction 2-(9Z-octadecenoyl)-glycerol + hexadecanoyl-CoA = 1-hexadecanoyl-2-(9Z-octadecenoyl)-sn-glycerol + CoA. It catalyses the reaction 1,2-di-(9Z-octadecenoyl)-sn-glycerol + hexadecanoyl-CoA = 1,2-di-(9Z)-octadecenoyl-3-hexadecanoyl-sn-glycerol + CoA. The enzyme catalyses hexadecan-1-ol + hexadecanoyl-CoA = hexadecanyl hexadecanoate + CoA. The catalysed reaction is 13-cis-retinol + hexadecanoyl-CoA = 13-cis-retinyl hexadecanoate + CoA. It carries out the reaction 1,3-di-(9Z-octadecenoyl)-glycerol + (9Z)-octadecenoyl-CoA = 1,2,3-tri-(9Z-octadecenoyl)-glycerol + CoA. It catalyses the reaction 2,3-di-(9Z)-octadecenoyl-sn-glycerol + (9Z)-octadecenoyl-CoA = 1,2,3-tri-(9Z-octadecenoyl)-glycerol + CoA. Its pathway is lipid metabolism; glycerolipid metabolism. In terms of biological role, catalyzes the terminal and only committed step in triacylglycerol synthesis by using diacylglycerol and fatty acyl CoA as substrates. Highly expressed in epithelial cells of the small intestine and its activity is essential for the absorption of dietary fats. In liver, plays a role in esterifying exogenous fatty acids to glycerol, and is required to synthesize fat for storage. Also present in female mammary glands, where it produces fat in the milk. May be involved in VLDL (very low density lipoprotein) assembly. In contrast to DGAT2 it is not essential for survival. Functions as the major acyl-CoA retinol acyltransferase (ARAT) in the skin, where it acts to maintain retinoid homeostasis and prevent retinoid toxicity leading to skin and hair disorders. Exhibits additional acyltransferase activities, includin acyl CoA:monoacylglycerol acyltransferase (MGAT), wax monoester and wax diester synthases. Also able to use 1-monoalkylglycerol (1-MAkG) as an acyl acceptor for the synthesis of monoalkyl-monoacylglycerol (MAMAG). The sequence is that of Diacylglycerol O-acyltransferase 1 from Rattus norvegicus (Rat).